Here is a 436-residue protein sequence, read N- to C-terminus: Enolase (436 aa).

The substrate site is built by H159 and E168. Catalysis depends on E211, which acts as the Proton donor. Mg(2+) contacts are provided by D246, E295, and D320. Substrate contacts are provided by E295 and D320. The active-site Proton acceptor is the K345. Substrate contacts are provided by residues 372–375 (SHRS) and K396.

This sequence belongs to the enolase family. In terms of assembly, homodimer. Mg(2+) serves as cofactor.

It localises to the cytoplasm. The enzyme catalyses (2R)-2-phosphoglycerate = phosphoenolpyruvate + H2O. The protein operates within carbohydrate degradation; glycolysis; pyruvate from D-glyceraldehyde 3-phosphate: step 4/5. The protein is Enolase of Cunninghamella elegans.